The chain runs to 453 residues: Homogentisate 1,2-dioxygenase (453 aa).

Basic and acidic residues predominate over residues 1-12 (MLEKAERQRKAA). The segment at 1 to 43 (MLEKAERQRKAAPDQQRSAGYMPGFGNDFETESLPGSLPQGQN) is disordered. His-306 functions as the Proton acceptor in the catalytic mechanism. Fe cation is bound by residues His-349 and Glu-355. Homogentisate contacts are provided by Tyr-364 and His-385. Fe cation is bound at residue His-385.

This sequence belongs to the homogentisate dioxygenase family. In terms of assembly, hexamer; dimer of trimers. Fe cation is required as a cofactor.

The catalysed reaction is homogentisate + O2 = 4-maleylacetoacetate + H(+). Its pathway is amino-acid degradation; L-phenylalanine degradation; acetoacetate and fumarate from L-phenylalanine: step 4/6. Involved in the catabolism of homogentisate (2,5-dihydroxyphenylacetate or 2,5-OH-PhAc), a central intermediate in the degradation of phenylalanine and tyrosine. Catalyzes the oxidative ring cleavage of the aromatic ring of homogentisate to yield maleylacetoacetate. This Sinorhizobium medicae (strain WSM419) (Ensifer medicae) protein is Homogentisate 1,2-dioxygenase.